The sequence spans 68 residues: Riparin-1.6 (68 aa).

The first 15 residues, 1 to 15 (MKIIVFLAVLMLVSA), serve as a signal peptide directing secretion. The propeptide occupies 16-41 (QVCLVSAAEMEHSSDNELSSRDLVKR). Cysteine 47 and cysteine 53 are oxidised to a cystine. Cysteine 53 carries the post-translational modification Cysteine amide. Positions 57–68 (DIESSEGANGGE) are excised as a propeptide.

As to expression, expressed by the skin glands.

It localises to the secreted. The polypeptide is Riparin-1.6 (Crinia riparia (Streambank froglet)).